The chain runs to 368 residues: 1-deoxy-D-xylulose 5-phosphate reductoisomerase (368 aa).

Residues threonine 10, glycine 11, serine 12, isoleucine 13, glutamine 38, and asparagine 100 each coordinate NADPH. Lysine 101 provides a ligand contact to 1-deoxy-D-xylulose 5-phosphate. Glutamate 102 serves as a coordination point for NADPH. Aspartate 125 is a binding site for Mn(2+). Residues serine 126, glutamate 127, serine 151, and histidine 172 each coordinate 1-deoxy-D-xylulose 5-phosphate. Mn(2+) is bound at residue glutamate 127. Glycine 178 provides a ligand contact to NADPH. The 1-deoxy-D-xylulose 5-phosphate site is built by serine 185, asparagine 190, lysine 191, and glutamate 194. Residue glutamate 194 coordinates Mn(2+).

This sequence belongs to the DXR family. The cofactor is Mg(2+). Mn(2+) is required as a cofactor.

The enzyme catalyses 2-C-methyl-D-erythritol 4-phosphate + NADP(+) = 1-deoxy-D-xylulose 5-phosphate + NADPH + H(+). The protein operates within isoprenoid biosynthesis; isopentenyl diphosphate biosynthesis via DXP pathway; isopentenyl diphosphate from 1-deoxy-D-xylulose 5-phosphate: step 1/6. In terms of biological role, catalyzes the NADPH-dependent rearrangement and reduction of 1-deoxy-D-xylulose-5-phosphate (DXP) to 2-C-methyl-D-erythritol 4-phosphate (MEP). The polypeptide is 1-deoxy-D-xylulose 5-phosphate reductoisomerase (Tropheryma whipplei (strain Twist) (Whipple's bacillus)).